Reading from the N-terminus, the 409-residue chain is Arginine deiminase (409 aa).

Cys399 functions as the Amidino-cysteine intermediate in the catalytic mechanism.

This sequence belongs to the arginine deiminase family.

It localises to the cytoplasm. The enzyme catalyses L-arginine + H2O = L-citrulline + NH4(+). The protein operates within amino-acid degradation; L-arginine degradation via ADI pathway; carbamoyl phosphate from L-arginine: step 1/2. The polypeptide is Arginine deiminase (Streptococcus gordonii (strain Challis / ATCC 35105 / BCRC 15272 / CH1 / DL1 / V288)).